Reading from the N-terminus, the 65-residue chain is Small ribosomal subunit protein bS21B (65 aa).

Belongs to the bacterial ribosomal protein bS21 family.

This Francisella tularensis subsp. holarctica (strain LVS) protein is Small ribosomal subunit protein bS21B.